The sequence spans 162 residues: uncharacterized protein (162 aa).

Helical transmembrane passes span 15–35, 43–63, 70–90, and 97–117; these read VLAI…APAL, VCHF…FDLS, LTIL…QSFL, and LFDI…NILY.

It localises to the membrane. This is an uncharacterized protein from Schizosaccharomyces pombe (strain 972 / ATCC 24843) (Fission yeast).